Consider the following 264-residue polypeptide: Thymidylate synthase 2 (264 aa).

Arg-21 lines the dUMP pocket. His-51 contributes to the (6R)-5,10-methylene-5,6,7,8-tetrahydrofolate binding site. Residue 126 to 127 (RR) participates in dUMP binding. The active-site Nucleophile is the Cys-146. Residues 166–169 (RSAD), Asn-177, and 207–209 (HIY) each bind dUMP. (6R)-5,10-methylene-5,6,7,8-tetrahydrofolate is bound at residue Asp-169. Residue Ser-263 coordinates (6R)-5,10-methylene-5,6,7,8-tetrahydrofolate.

This sequence belongs to the thymidylate synthase family. Bacterial-type ThyA subfamily. In terms of assembly, homodimer.

It is found in the cytoplasm. It carries out the reaction dUMP + (6R)-5,10-methylene-5,6,7,8-tetrahydrofolate = 7,8-dihydrofolate + dTMP. Its pathway is pyrimidine metabolism; dTTP biosynthesis. Its function is as follows. Catalyzes the reductive methylation of 2'-deoxyuridine-5'-monophosphate (dUMP) to 2'-deoxythymidine-5'-monophosphate (dTMP) while utilizing 5,10-methylenetetrahydrofolate (mTHF) as the methyl donor and reductant in the reaction, yielding dihydrofolate (DHF) as a by-product. This enzymatic reaction provides an intracellular de novo source of dTMP, an essential precursor for DNA biosynthesis. This is Thymidylate synthase 2 from Bacillus amyloliquefaciens (Bacillus velezensis).